The chain runs to 275 residues: NH(3)-dependent NAD(+) synthetase (275 aa).

50–57 lines the ATP pocket; the sequence is GISGGVDS. A Mg(2+)-binding site is contributed by Asp-56. Arg-147 is a binding site for deamido-NAD(+). Thr-167 provides a ligand contact to ATP. Position 172 (Glu-172) interacts with Mg(2+). Positions 180 and 187 each coordinate deamido-NAD(+). Residues Lys-196 and Thr-218 each contribute to the ATP site. Position 267-268 (267-268) interacts with deamido-NAD(+); it reads HK.

The protein belongs to the NAD synthetase family. In terms of assembly, homodimer.

The catalysed reaction is deamido-NAD(+) + NH4(+) + ATP = AMP + diphosphate + NAD(+) + H(+). It functions in the pathway cofactor biosynthesis; NAD(+) biosynthesis; NAD(+) from deamido-NAD(+) (ammonia route): step 1/1. Catalyzes the ATP-dependent amidation of deamido-NAD to form NAD. Uses ammonia as a nitrogen source. In Ectopseudomonas mendocina (strain ymp) (Pseudomonas mendocina), this protein is NH(3)-dependent NAD(+) synthetase.